Reading from the N-terminus, the 436-residue chain is tRNA-2-methylthio-N(6)-dimethylallyladenosine synthase (436 aa).

The MTTase N-terminal domain occupies 5 to 121; that stretch reads RKLFIKTYGC…LPDMLDRTEG (117 aa). Residues cysteine 14, cysteine 50, cysteine 84, cysteine 158, cysteine 162, and cysteine 165 each contribute to the [4Fe-4S] cluster site. In terms of domain architecture, Radical SAM core spans 144-374; the sequence is ATRGPAAFLT…TEQQRAAQMA (231 aa). Residues 373–435 form the TRAM domain; the sequence is MAMVGREVGV…PNSLAGERLG (63 aa).

This sequence belongs to the methylthiotransferase family. MiaB subfamily. As to quaternary structure, monomer. The cofactor is [4Fe-4S] cluster.

It is found in the cytoplasm. It carries out the reaction N(6)-dimethylallyladenosine(37) in tRNA + (sulfur carrier)-SH + AH2 + 2 S-adenosyl-L-methionine = 2-methylsulfanyl-N(6)-dimethylallyladenosine(37) in tRNA + (sulfur carrier)-H + 5'-deoxyadenosine + L-methionine + A + S-adenosyl-L-homocysteine + 2 H(+). In terms of biological role, catalyzes the methylthiolation of N6-(dimethylallyl)adenosine (i(6)A), leading to the formation of 2-methylthio-N6-(dimethylallyl)adenosine (ms(2)i(6)A) at position 37 in tRNAs that read codons beginning with uridine. This is tRNA-2-methylthio-N(6)-dimethylallyladenosine synthase from Cereibacter sphaeroides (strain ATCC 17029 / ATH 2.4.9) (Rhodobacter sphaeroides).